Consider the following 582-residue polypeptide: Inactive metallocarboxypeptidase ECM14 (582 aa).

An N-terminal signal peptide occupies residues 1-20; the sequence is MHILQVITGATLVSVPFVSA. A propeptide spanning residues 21–172 is cleaved from the precursor; that stretch reads IPSSTSEFLP…QAVYESYPQP (152 aa). A Peptidase M14 domain is found at 200–522; it reads DYQPLSVIIP…NAVLVFGQFL (323 aa). 2 residues coordinate Zn(2+): His265 and Glu268. Substrate is bound by residues 265-268, Arg323, and 340-341; these read HARE and DR. Residues Cys334 and Cys357 are joined by a disulfide bond. 2 N-linked (GlcNAc...) asparagine glycosylation sites follow: Asn381 and Asn387. Residue His397 participates in Zn(2+) binding. 398–399 lines the substrate pocket; that stretch reads SY. Residues 561-571 show a composition bias toward acidic residues; sequence SNQLEDDDNEN. Positions 561 to 582 are disordered; that stretch reads SNQLEDDDNENDTLLGFRTQKV. An N-linked (GlcNAc...) asparagine glycan is attached at Asn571.

Belongs to the peptidase M14 family. Zn(2+) serves as cofactor.

The protein resides in the vacuole. The protein localises to the secreted. Its function is as follows. Inactive carboxypeptidase that may play a role in cell wall organization and biogenesis. The chain is Inactive metallocarboxypeptidase ECM14 (ECM14) from Coccidioides posadasii (strain RMSCC 757 / Silveira) (Valley fever fungus).